Consider the following 482-residue polypeptide: Glutamate--tRNA ligase (482 aa).

Positions 9–19 (PSPTGYLHIGG) match the 'HIGH' region motif. The 'KMSKS' region motif lies at 252-256 (KLSKR). Lys255 is an ATP binding site.

Belongs to the class-I aminoacyl-tRNA synthetase family. Glutamate--tRNA ligase type 1 subfamily. Monomer.

It is found in the cytoplasm. The enzyme catalyses tRNA(Glu) + L-glutamate + ATP = L-glutamyl-tRNA(Glu) + AMP + diphosphate. Its function is as follows. Catalyzes the attachment of glutamate to tRNA(Glu) in a two-step reaction: glutamate is first activated by ATP to form Glu-AMP and then transferred to the acceptor end of tRNA(Glu). In Ureaplasma urealyticum serovar 10 (strain ATCC 33699 / Western), this protein is Glutamate--tRNA ligase.